The sequence spans 558 residues: Polysialic acid transport protein KpsD (558 aa).

The N-terminal stretch at 1 to 20 (MKLFKSILLIAACHAAQASA) is a signal peptide.

The protein to E.coli K1 KpsD.

The protein resides in the periplasm. Functionally, involved in the translocation of the polysialic acid capsule across the outer membrane to the cell surface. May function as the periplasmic binding element of the PSA transport system, in which it transiently interacts with the membrane component of the transporter, binds polysaccharide and transports the polymer to a component in the outer membrane. The sequence is that of Polysialic acid transport protein KpsD (kpsD) from Escherichia coli.